We begin with the raw amino-acid sequence, 358 residues long: Trace amine-associated receptor 7a (358 aa).

The Extracellular segment spans residues 1-47; that stretch reads MDKLVDNFLSGQSRTMSEDLLSASSPQLCYENLNGSCIRSPYSPGPR. The N-linked (GlcNAc...) asparagine glycan is linked to Asn-34. Intrachain disulfides connect Cys-37-Cys-201 and Cys-120-Cys-205. Residues 48 to 68 traverse the membrane as a helical segment; that stretch reads LILYAVFGFGAVLAVCGNLLV. The Cytoplasmic portion of the chain corresponds to 69–83; sequence MTSILHFRQLHSPAN. A helical transmembrane segment spans residues 84–104; that stretch reads FLVASLACADFLVGLTVMPFS. At 105 to 121 the chain is on the extracellular side; sequence TVRSVEGCWYFGDTYCK. Residues 122–143 traverse the membrane as a helical segment; the sequence is FHSCFEGSFCYSSIFHLCFISV. Over 144 to 166 the chain is Cytoplasmic; the sequence is DRYIAVSDPLIYPTRFTASVSGK. A helical membrane pass occupies residues 167 to 187; it reads CITFSWLLSIIYSFSLLYTGA. Topologically, residues 188-212 are extracellular; that stretch reads NEAGLEDLVSALTCVGGCQIAVNQS. N-linked (GlcNAc...) asparagine glycosylation occurs at Asn-210. The chain crosses the membrane as a helical span at residues 213–233; that stretch reads WVFINFLLFLVPTLVMMTVYS. The Cytoplasmic segment spans residues 234 to 274; it reads KIFLIAKQQAQNIEKMSKQTTRASESYKDRVAKRERKAAKT. The helical transmembrane segment at 275 to 295 threads the bilayer; the sequence is LGIAVAAFLLSWLPYFIDSII. The Extracellular segment spans residues 296 to 309; sequence DAFLGFITPTYVYE. A helical membrane pass occupies residues 310–333; that stretch reads ILVWIAYYNSAMNPLIYAFFYPWF. Residues 334–358 lie on the Cytoplasmic side of the membrane; that stretch reads RKAIKLIVTGKILRQNSSVTNLFPE.

It belongs to the G-protein coupled receptor 1 family.

It is found in the cell membrane. Functionally, olfactory receptor specific for N,N-dimethylalkylamines trace amines. Trace amine compounds are enriched in animal body fluids and act on trace amine-associated receptors (TAARs) to elicit both intraspecific and interspecific innate behaviors. Ligand-binding causes a conformation change that triggers signaling via G(s)-class of G alpha proteins (GNAL or GNAS). This chain is Trace amine-associated receptor 7a, found in Rattus norvegicus (Rat).